We begin with the raw amino-acid sequence, 112 residues long: UPF0342 protein SGO_1370 (112 aa).

This sequence belongs to the UPF0342 family.

This is UPF0342 protein SGO_1370 from Streptococcus gordonii (strain Challis / ATCC 35105 / BCRC 15272 / CH1 / DL1 / V288).